The primary structure comprises 446 residues: Chromosomal replication initiator protein DnaA (446 aa).

Residues 1-72 (MENILDLWNK…ADTIYELTGE (72 aa)) are domain I, interacts with DnaA modulators. The interval 72 to 109 (EELSIKFIIPQNQDEVEAMPKSPIKKMSKEDPVDIPQN) is domain II. The domain III, AAA+ region stretch occupies residues 110 to 326 (MLNPKYTFDT…GALIRVVAYS (217 aa)). 4 residues coordinate ATP: Gly154, Gly156, Lys157, and Thr158. The interval 327-446 (SLINKDINAD…HVKEIKEQLK (120 aa)) is domain IV, binds dsDNA.

Belongs to the DnaA family. As to quaternary structure, oligomerizes as a right-handed, spiral filament on DNA at oriC.

The protein resides in the cytoplasm. Its function is as follows. Plays an essential role in the initiation and regulation of chromosomal replication. ATP-DnaA binds to the origin of replication (oriC) to initiate formation of the DNA replication initiation complex once per cell cycle. Binds the DnaA box (a 9 base pair repeat at the origin) and separates the double-stranded (ds)DNA. Forms a right-handed helical filament on oriC DNA; dsDNA binds to the exterior of the filament while single-stranded (ss)DNA is stabiized in the filament's interior. The ATP-DnaA-oriC complex binds and stabilizes one strand of the AT-rich DNA unwinding element (DUE), permitting loading of DNA polymerase. After initiation quickly degrades to an ADP-DnaA complex that is not apt for DNA replication. Binds acidic phospholipids. The polypeptide is Chromosomal replication initiator protein DnaA (Bacillus pumilus (strain SAFR-032)).